The chain runs to 500 residues: Perfringolysin O (500 aa).

An N-terminal signal peptide occupies residues 1 to 28 (MIRFKKTKLIASIAMALCLFSQPVISFS). A run of 4 beta stranded transmembrane segments spans residues 189–202 (KSQI…NAKV), 209–218 (VDFNAVANNE), 287–296 (SKDVQAAFKA), and 304–316 (KNSQ…YENS). The short motif at 458-468 (ECTGLAWEWWR) is the Conserved undecapeptide element. A Cholesterol binding motif is present at residues 490–491 (TL).

It belongs to the cholesterol-dependent cytolysin family. As to quaternary structure, homooligomeric pore complex of 35 to 50 subunits; when inserted in the host membrane.

The protein localises to the secreted. It is found in the host cell membrane. In terms of biological role, a cholesterol-dependent toxin that causes cytolysis by forming pores in cholesterol containing host membranes. After binding to target membranes, the protein assembles into a pre-pore complex. A conformation change leads to insertion in the host membrane and formation of an oligomeric pore complex. Cholesterol is required for binding to host cell membranes, membrane insertion and pore formation; cholesterol binding is mediated by a Thr-Leu pair in the C-terminus. Can be reversibly inactivated by oxidation. The chain is Perfringolysin O (pfo) from Clostridium perfringens (strain ATCC 13124 / DSM 756 / JCM 1290 / NCIMB 6125 / NCTC 8237 / Type A).